The following is a 393-amino-acid chain: Anhydro-N-acetylmuramic acid kinase (393 aa).

ATP is bound at residue 9–16; the sequence is GTSADGVD.

The protein belongs to the anhydro-N-acetylmuramic acid kinase family.

It catalyses the reaction 1,6-anhydro-N-acetyl-beta-muramate + ATP + H2O = N-acetyl-D-muramate 6-phosphate + ADP + H(+). It functions in the pathway amino-sugar metabolism; 1,6-anhydro-N-acetylmuramate degradation. It participates in cell wall biogenesis; peptidoglycan recycling. Catalyzes the specific phosphorylation of 1,6-anhydro-N-acetylmuramic acid (anhMurNAc) with the simultaneous cleavage of the 1,6-anhydro ring, generating MurNAc-6-P. Is required for the utilization of anhMurNAc either imported from the medium or derived from its own cell wall murein, and thus plays a role in cell wall recycling. The polypeptide is Anhydro-N-acetylmuramic acid kinase (Acidithiobacillus ferrooxidans (strain ATCC 23270 / DSM 14882 / CIP 104768 / NCIMB 8455) (Ferrobacillus ferrooxidans (strain ATCC 23270))).